Reading from the N-terminus, the 148-residue chain is Snaclec 4 (148 aa).

The first 23 residues, 1 to 23 (MGRFIFVSFSLLVVFFSLSGTEA), serve as a signal peptide directing secretion. Residues 34 to 148 (YDQNCYKAFE…DTQFRLQEPG (115 aa)) enclose the C-type lectin domain.

This sequence belongs to the snaclec family. Heterodimer; disulfide-linked. Contains disulfide bonds. In terms of tissue distribution, expressed by the venom gland.

Its subcellular location is the secreted. Interferes with one step of hemostasis (modulation of platelet aggregation, or coagulation cascade, for example). This is Snaclec 4 from Echis pyramidum leakeyi (Leakey's carpet viper).